The following is an 87-amino-acid chain: Kappa-4-bungarotoxin (87 aa).

The signal sequence occupies residues 1-21 (MKTLLLTLVVVTIVCLDLGYT). Disulfide bonds link cysteine 24/cysteine 42, cysteine 35/cysteine 63, cysteine 48/cysteine 52, cysteine 67/cysteine 79, and cysteine 80/cysteine 85.

It belongs to the three-finger toxin family. Long-chain subfamily. Kappa-neurotoxin sub-subfamily. As to quaternary structure, homo- and heterodimer; non-covalently linked. Expressed by the venom gland.

The protein resides in the secreted. In terms of biological role, postsynaptic neurotoxin that binds and inhibits neuronal nicotinic acetylcholine receptors (nAChR) with high affinity (IC(50)&lt;100 nM). Is a selective, and slowly reversible antagonist of alpha-3/CHRNA3-containing and some alpha-4/CHRNA4-containing AChRs. The protein is Kappa-4-bungarotoxin of Bungarus multicinctus (Many-banded krait).